The primary structure comprises 77 residues: Conotoxin S6.11 (77 aa).

A signal peptide spans 1–19 (MEKLTILLLVAAVLMSTQA). Positions 20–50 (LIQGGLDERQKAKSNFFSKRKSNAESWWEGE) are excised as a propeptide. Disulfide bonds link Cys51/Cys65, Cys58/Cys69, and Cys64/Cys74.

It belongs to the conotoxin O2 superfamily. As to expression, expressed by the venom duct.

It localises to the secreted. In Conus striatus (Striated cone), this protein is Conotoxin S6.11.